A 528-amino-acid polypeptide reads, in one-letter code: UDP-glucuronosyltransferase 2B10 (528 aa).

A signal peptide spans methionine 1–glycine 23. N-linked (GlcNAc...) asparagine glycosylation occurs at asparagine 66. Lysine 134 is modified (N6-succinyllysine). Residues asparagine 314 and asparagine 481 are each glycosylated (N-linked (GlcNAc...) asparagine). Residues valine 492 to leucine 512 traverse the membrane as a helical segment.

Belongs to the UDP-glycosyltransferase family.

It localises to the microsome membrane. The protein localises to the endoplasmic reticulum membrane. The enzyme catalyses glucuronate acceptor + UDP-alpha-D-glucuronate = acceptor beta-D-glucuronoside + UDP + H(+). UDPGT is of major importance in the conjugation and subsequent elimination of potentially toxic xenobiotics and endogenous compounds. The sequence is that of UDP-glucuronosyltransferase 2B10 (UGT2B10) from Homo sapiens (Human).